A 202-amino-acid chain; its full sequence is Small ribosomal subunit protein uS4c (202 aa).

Residues 90–165 form the S4 RNA-binding domain; that stretch reads MRLDNILFRL…SQKYKIPNHL (76 aa).

Belongs to the universal ribosomal protein uS4 family. As to quaternary structure, part of the 30S ribosomal subunit. Contacts protein S5. The interaction surface between S4 and S5 is involved in control of translational fidelity.

It localises to the plastid. Its subcellular location is the chloroplast. In terms of biological role, one of the primary rRNA binding proteins, it binds directly to 16S rRNA where it nucleates assembly of the body of the 30S subunit. Its function is as follows. With S5 and S12 plays an important role in translational accuracy. This Diphyscium foliosum (Nut-moss) protein is Small ribosomal subunit protein uS4c (rps4).